The sequence spans 177 residues: LOB domain-containing protein 33 (177 aa).

In terms of domain architecture, LOB spans serine 6 to methionine 108.

It belongs to the LOB domain-containing protein family. As to expression, expressed in roots.

This Arabidopsis thaliana (Mouse-ear cress) protein is LOB domain-containing protein 33 (LBD33).